The primary structure comprises 194 residues: Peptide deformylase (194 aa).

Positions 71 to 93 (DAEPEECGHDHGDGEGAHKHYPV) are disordered. Positions 76 to 93 (ECGHDHGDGEGAHKHYPV) are enriched in basic and acidic residues. Fe cation-binding residues include Cys119 and His161. The active site involves Glu162. His165 contributes to the Fe cation binding site.

This sequence belongs to the polypeptide deformylase family. The cofactor is Fe(2+).

The catalysed reaction is N-terminal N-formyl-L-methionyl-[peptide] + H2O = N-terminal L-methionyl-[peptide] + formate. Removes the formyl group from the N-terminal Met of newly synthesized proteins. Requires at least a dipeptide for an efficient rate of reaction. N-terminal L-methionine is a prerequisite for activity but the enzyme has broad specificity at other positions. This Erythrobacter litoralis (strain HTCC2594) protein is Peptide deformylase.